We begin with the raw amino-acid sequence, 415 residues long: Fructose-1,6-bisphosphatase, chloroplastic (415 aa).

A chloroplast-targeting transit peptide spans 1-57 (MASIGPATTTAVKLRSSIFNPQSSTLSPSQQCITFTKSLHSFPTATRHNVASGVRCM). 5 residues coordinate Mg(2+): Glu-135, Glu-164, Asp-185, Leu-187, and Asp-188. 188–191 (DGSS) contacts substrate. Residues 207–232 (SPNDECIVDSDHDDESQLSAEEQRCV) form an involved in light regulation region. Cys-231 and Cys-236 form a disulfide bridge. 5 residues coordinate substrate: Asn-295, Tyr-327, Tyr-345, Tyr-347, and Lys-357. Glu-363 provides a ligand contact to Mg(2+).

Belongs to the FBPase class 1 family. In terms of assembly, homotetramer. The cofactor is Mg(2+).

It localises to the plastid. The protein resides in the chloroplast. The enzyme catalyses beta-D-fructose 1,6-bisphosphate + H2O = beta-D-fructose 6-phosphate + phosphate. The protein operates within carbohydrate biosynthesis; Calvin cycle. This chain is Fructose-1,6-bisphosphatase, chloroplastic, found in Spinacia oleracea (Spinach).